Consider the following 426-residue polypeptide: Serine--tRNA ligase (426 aa).

Residue 231–233 (TSE) coordinates L-serine. 262-264 (RSE) contributes to the ATP binding site. Residue E285 participates in L-serine binding. 349–352 (EISS) provides a ligand contact to ATP. S385 provides a ligand contact to L-serine.

The protein belongs to the class-II aminoacyl-tRNA synthetase family. Type-1 seryl-tRNA synthetase subfamily. In terms of assembly, homodimer. The tRNA molecule binds across the dimer.

The protein resides in the cytoplasm. The enzyme catalyses tRNA(Ser) + L-serine + ATP = L-seryl-tRNA(Ser) + AMP + diphosphate + H(+). It catalyses the reaction tRNA(Sec) + L-serine + ATP = L-seryl-tRNA(Sec) + AMP + diphosphate + H(+). Its pathway is aminoacyl-tRNA biosynthesis; selenocysteinyl-tRNA(Sec) biosynthesis; L-seryl-tRNA(Sec) from L-serine and tRNA(Sec): step 1/1. In terms of biological role, catalyzes the attachment of serine to tRNA(Ser). Is also able to aminoacylate tRNA(Sec) with serine, to form the misacylated tRNA L-seryl-tRNA(Sec), which will be further converted into selenocysteinyl-tRNA(Sec). The protein is Serine--tRNA ligase of Legionella pneumophila (strain Paris).